A 359-amino-acid chain; its full sequence is Quinolinate synthase (359 aa).

Iminosuccinate contacts are provided by His81 and Ser99. Position 144 (Cys144) interacts with [4Fe-4S] cluster. Residues 170-172 and Ser187 contribute to the iminosuccinate site; that span reads YVN. Cys229 is a binding site for [4Fe-4S] cluster. Residues 255–257 and Thr272 each bind iminosuccinate; that span reads HPE. Cys315 is a [4Fe-4S] cluster binding site.

It belongs to the quinolinate synthase family. Type 2 subfamily. It depends on [4Fe-4S] cluster as a cofactor.

The protein localises to the cytoplasm. It catalyses the reaction iminosuccinate + dihydroxyacetone phosphate = quinolinate + phosphate + 2 H2O + H(+). It participates in cofactor biosynthesis; NAD(+) biosynthesis; quinolinate from iminoaspartate: step 1/1. Its function is as follows. Catalyzes the condensation of iminoaspartate with dihydroxyacetone phosphate to form quinolinate. The polypeptide is Quinolinate synthase (Sinorhizobium fredii (strain NBRC 101917 / NGR234)).